Here is a 360-residue protein sequence, read N- to C-terminus: Protein MGF 360-2L (360 aa).

It belongs to the asfivirus MGF 360 family.

Plays a role in virus cell tropism, and may be required for efficient virus replication in macrophages. This Ornithodoros (relapsing fever ticks) protein is Protein MGF 360-2L.